A 75-amino-acid chain; its full sequence is DNA-directed RNA polymerase subunit omega (75 aa).

The protein belongs to the RNA polymerase subunit omega family. In terms of assembly, in cyanobacteria the RNAP catalytic core is composed of 2 alpha, 1 beta, 1 beta', 1 gamma and 1 omega subunit. When a sigma factor is associated with the core the holoenzyme is formed, which can initiate transcription.

The enzyme catalyses RNA(n) + a ribonucleoside 5'-triphosphate = RNA(n+1) + diphosphate. In terms of biological role, promotes RNA polymerase assembly. Latches the N- and C-terminal regions of the beta' subunit thereby facilitating its interaction with the beta and alpha subunits. The chain is DNA-directed RNA polymerase subunit omega from Picosynechococcus sp. (strain ATCC 27264 / PCC 7002 / PR-6) (Agmenellum quadruplicatum).